Here is a 92-residue protein sequence, read N- to C-terminus: UPF0473 protein Cbei_1107 (92 aa).

It belongs to the UPF0473 family.

The chain is UPF0473 protein Cbei_1107 from Clostridium beijerinckii (strain ATCC 51743 / NCIMB 8052) (Clostridium acetobutylicum).